Here is a 65-residue protein sequence, read N- to C-terminus: Large ribosomal subunit protein bL35 (65 aa).

Over residues 1–10 (MPKMKSKSSA) the composition is skewed to basic residues. Positions 1 to 21 (MPKMKSKSSAKMRFSVRAGGT) are disordered.

The protein belongs to the bacterial ribosomal protein bL35 family.

The chain is Large ribosomal subunit protein bL35 from Polynucleobacter necessarius subsp. necessarius (strain STIR1).